Consider the following 366-residue polypeptide: uncharacterized protein (366 aa).

Residues 169-280 (ILDTSVIIDG…LNKVCELQKV (112 aa)) form the PINc domain. D250 serves as a coordination point for Mg(2+). Positions 295–356 (VVLPGEEMNV…LQTAAGRMIF (62 aa)) constitute a TRAM domain.

This sequence belongs to the ycf81 family. The protein in the central section; belongs to the PINc/VapC protein family. Requires Mg(2+) as cofactor.

In terms of biological role, an RNase. This is an uncharacterized protein from Bacillus subtilis (strain 168).